Consider the following 711-residue polypeptide: Polyribonucleotide nucleotidyltransferase (711 aa).

Mg(2+)-binding residues include D486 and D492. The region spanning 553–612 (PRIHTIKISTDKIKDVIGKGGSVIRALTEETGTTIEIEDDGTVKIAATDGEKAKYAIRRI) is the KH domain. The S1 motif domain occupies 622–690 (GRIYNSKVTR…RQGRVRLSIK (69 aa)). Positions 689–711 (IKEATEQSQPAAAPEAPASEQAE) are disordered. The segment covering 694 to 711 (EQSQPAAAPEAPASEQAE) has biased composition (low complexity).

It belongs to the polyribonucleotide nucleotidyltransferase family. In terms of assembly, component of the RNA degradosome, which is a multiprotein complex involved in RNA processing and mRNA degradation. It depends on Mg(2+) as a cofactor.

Its subcellular location is the cytoplasm. It carries out the reaction RNA(n+1) + phosphate = RNA(n) + a ribonucleoside 5'-diphosphate. Involved in mRNA degradation. Catalyzes the phosphorolysis of single-stranded polyribonucleotides processively in the 3'- to 5'-direction. In Salmonella typhi, this protein is Polyribonucleotide nucleotidyltransferase.